The chain runs to 258 residues: MVALRLPRGLWTAALTVMLVVLGAPVAEGRDSPQDFVVQFKGECYFYNGTQRVWSVDRYIYNQEEFLRFDSDMGEYRAVTPLGRPDADYLNGQKEALEQKRAELDTVCKHNYQIEEGTTLQRRVQPTVTISPSKAEALNHHNLLVCAVTDFYPSQVKVQWFRNGQEETAGVVSTPLIRNGDWTYQVLVMLEMNLQRGDVYTCRVEHSSLQSPILVEWRAQSESAQSKMLSGVGGFVLGLIFLGLGLFIRHRSQKGLVR.

The signal sequence occupies residues 1–31; the sequence is MVALRLPRGLWTAALTVMLVVLGAPVAEGRD. A beta-1 region spans residues 32–123; it reads SPQDFVVQFK…IEEGTTLQRR (92 aa). The Extracellular portion of the chain corresponds to 32–227; that stretch reads SPQDFVVQFK…RAQSESAQSK (196 aa). 2 disulfide bridges follow: cysteine 44–cysteine 108 and cysteine 146–cysteine 202. Asparagine 48 carries an N-linked (GlcNAc...) asparagine glycan. The tract at residues 124-217 is beta-2; that stretch reads VQPTVTISPS…SLQSPILVEW (94 aa). One can recognise an Ig-like C1-type domain in the interval 126–230; the sequence is PTVTISPSKA…SESAQSKMLS (105 aa). Positions 218-227 are connecting peptide; that stretch reads RAQSESAQSK. A helical membrane pass occupies residues 228 to 248; it reads MLSGVGGFVLGLIFLGLGLFI. Topologically, residues 249–258 are cytoplasmic; sequence RHRSQKGLVR.

It belongs to the MHC class II family.

Its subcellular location is the membrane. The sequence is that of SLA class II histocompatibility antigen, DQ haplotype D beta chain from Sus scrofa (Pig).